We begin with the raw amino-acid sequence, 625 residues long: Chaperone protein HtpG (625 aa).

The segment at 1–332 is a; substrate-binding; sequence MSNKQNTAVQ…TEDLSLNVSR (332 aa). Positions 333–545 are b; the sequence is EIVQSSPVMS…KDAMDSQMER (213 aa). Positions 546–625 are c; the sequence is MMKMMQQEMP…ELIEAATLSR (80 aa).

Belongs to the heat shock protein 90 family. Homodimer.

The protein localises to the cytoplasm. Functionally, molecular chaperone. Has ATPase activity. The chain is Chaperone protein HtpG from Chlorobium luteolum (strain DSM 273 / BCRC 81028 / 2530) (Pelodictyon luteolum).